The sequence spans 239 residues: Adapter protein MecA (239 aa).

Basic and acidic residues predominate over residues 118–128; the sequence is EQRTKEKEAQG. Positions 118–137 are disordered; the sequence is EQRTKEKEAQGSKRQKSSAR.

The protein belongs to the MecA family. As to quaternary structure, homodimer.

Functionally, enables the recognition and targeting of unfolded and aggregated proteins to the ClpC protease or to other proteins involved in proteolysis. This chain is Adapter protein MecA, found in Staphylococcus aureus (strain JH1).